Reading from the N-terminus, the 356-residue chain is DNA polymerase IV (356 aa).

The 182-residue stretch at 7–188 folds into the UmuC domain; that stretch reads IIHIDMDCFY…LPLKKISGVG (182 aa). Residues D11 and D106 each contribute to the Mg(2+) site. Residue E107 is part of the active site.

It belongs to the DNA polymerase type-Y family. As to quaternary structure, monomer. The cofactor is Mg(2+).

It localises to the cytoplasm. It carries out the reaction DNA(n) + a 2'-deoxyribonucleoside 5'-triphosphate = DNA(n+1) + diphosphate. In terms of biological role, poorly processive, error-prone DNA polymerase involved in untargeted mutagenesis. Copies undamaged DNA at stalled replication forks, which arise in vivo from mismatched or misaligned primer ends. These misaligned primers can be extended by PolIV. Exhibits no 3'-5' exonuclease (proofreading) activity. May be involved in translesional synthesis, in conjunction with the beta clamp from PolIII. The chain is DNA polymerase IV from Glaesserella parasuis serovar 5 (strain SH0165) (Haemophilus parasuis).